A 1403-amino-acid polypeptide reads, in one-letter code: Centrosomal protein of 162 kDa (1403 aa).

The segment at 18-42 is disordered; that stretch reads KELSDDSFENSDKTARQSKKEMKKK. 2 positions are modified to phosphoserine: serine 157 and serine 160. The interval 170–231 is disordered; that stretch reads QANAELTDDE…EKISVPKQEE (62 aa). A compositionally biased stretch (basic and acidic residues) spans 208–231; sequence TKDEEMPSKENSKSEKISVPKQEE. A phosphoserine mark is found at serine 474 and serine 475. Residues 476–504 are disordered; that stretch reads EEEGAVMGKQVPYKKARSAPPLLKRKPQS. Over residues 487–502 the composition is skewed to basic residues; sequence PYKKARSAPPLLKRKP. Coiled-coil stretches lie at residues 617–670, 698–1121, 1171–1206, and 1235–1386; these read KRVQ…QDNY, VTGE…MLSN, EVLQ…QFEN, and CQNA…LHRQ.

Belongs to the CEP162 family. As to quaternary structure, interacts with CEP290. Interacts with CPNE4. Interacts with alpha-tubulin.

Its subcellular location is the cytoplasm. It is found in the cytoskeleton. The protein localises to the microtubule organizing center. The protein resides in the centrosome. It localises to the centriole. Its subcellular location is the spindle. It is found in the nucleus. Its function is as follows. Required to promote assembly of the transition zone in primary cilia. Acts by specifically recognizing and binding the axonemal microtubule. Localizes to the distal ends of centrioles before ciliogenesis and directly binds to axonemal microtubule, thereby promoting and restricting transition zone formation specifically at the cilia base. Required to mediate CEP290 association with microtubules. This is Centrosomal protein of 162 kDa (CEP162) from Homo sapiens (Human).